The sequence spans 353 residues: Serine proteinase inhibitor 1 (353 aa).

Belongs to the serpin family. Poxviruses subfamily.

It localises to the host cytoplasm. Plays a role in mediating viral host range. May act to inhibit a caspase independent form of apoptosis to allow efficient virus replication in infected cells. In Vaccinia virus (strain Copenhagen) (VACV), this protein is Serine proteinase inhibitor 1 (OPG208).